We begin with the raw amino-acid sequence, 805 residues long: Rho GTPase-activating protein 42 (805 aa).

The region spanning 7–262 (EFSDSFLDSP…IRSAEQDFKA (256 aa)) is the BAR domain. The stretch at 225–262 (KQQLQFNLQNTRNNFESTRQEVENLMRRIRSAEQDFKA) forms a coiled coil. A PH domain is found at 265–374 (QWTMEGFLYV…WMEAMDGKEP (110 aa)). One can recognise a Rho-GAP domain in the interval 376–572 (YTLPALLSKK…ILIENYDKIF (197 aa)). 3 disordered regions span residues 576–600 (PDPNVPLPHPQSHSQSRGGARRSKA), 625–725 (SDTF…SELL), and 765–805 (VSRS…PGSV). Low complexity predominate over residues 626–654 (DTFSSSPSSTPMGSMESLSSHSSEQNSCS). Polar residues predominate over residues 670-693 (LCWTTPSPSTNGPKSPACTTSPDS). The segment covering 694–704 (SSKEDANKTDG) has biased composition (basic and acidic residues). Over residues 710–721 (LSTSPGDRSSPA) the composition is skewed to polar residues. Basic and acidic residues predominate over residues 782–793 (PPKDGMRFRDDS).

Its function is as follows. May influence blood pressure by functioning as a GTPase-activating protein in vascular smooth muscle. In Danio rerio (Zebrafish), this protein is Rho GTPase-activating protein 42.